Here is a 458-residue protein sequence, read N- to C-terminus: Argininosuccinate lyase (458 aa).

The protein belongs to the lyase 1 family. Argininosuccinate lyase subfamily.

The protein resides in the cytoplasm. The catalysed reaction is 2-(N(omega)-L-arginino)succinate = fumarate + L-arginine. Its pathway is amino-acid biosynthesis; L-arginine biosynthesis; L-arginine from L-ornithine and carbamoyl phosphate: step 3/3. The protein is Argininosuccinate lyase of Glaesserella parasuis serovar 5 (strain SH0165) (Haemophilus parasuis).